A 345-amino-acid chain; its full sequence is L-threonine 3-dehydrogenase (345 aa).

C42 serves as a coordination point for Zn(2+). Catalysis depends on charge relay system residues T44 and H47. Zn(2+) is bound by residues H67, E68, C97, C100, C103, and C111. Residues I179, D199, R204, 266–268 (LGI), and 290–291 (IY) contribute to the NAD(+) site.

This sequence belongs to the zinc-containing alcohol dehydrogenase family. In terms of assembly, homotetramer. The cofactor is Zn(2+).

The protein resides in the cytoplasm. The catalysed reaction is L-threonine + NAD(+) = (2S)-2-amino-3-oxobutanoate + NADH + H(+). Its pathway is amino-acid degradation; L-threonine degradation via oxydo-reductase pathway; glycine from L-threonine: step 1/2. Catalyzes the NAD(+)-dependent oxidation of L-threonine to 2-amino-3-ketobutyrate. This Rhizobium etli (strain CIAT 652) protein is L-threonine 3-dehydrogenase.